A 232-amino-acid chain; its full sequence is Phospholipase A2 hemilipin (232 aa).

The N-terminal stretch at 1–18 is a signal peptide; sequence MTFLILTILATVTPSLYS. Positions 19–105 are excised as a propeptide; sequence HVVQRELRVN…QRCSGSAEGR (87 aa). Ca(2+)-binding residues include Trp115, Gly117, and Gly119. 5 cysteine pairs are disulfide-bonded: Cys116–Cys137, Cys136–Cys175, Cys143–Cys168, Cys166–Cys206, and Cys211–Cys219. The N-linked (GlcNAc...) asparagine glycan is linked to Asn124. The active site involves His140. Residue Asp141 participates in Ca(2+) binding. A glycan (N-linked (GlcNAc...) asparagine) is linked at Asn157. Residues 214 to 217 constitute a propeptide that is removed on maturation; the sequence is KRDA.

This sequence belongs to the phospholipase A2 family. Group III subfamily. Heterodimer composed of a small subunit and a large subunit; disulfid-linked. Ca(2+) is required as a cofactor. Expressed by the venom gland.

Its subcellular location is the secreted. It carries out the reaction a 1,2-diacyl-sn-glycero-3-phosphocholine + H2O = a 1-acyl-sn-glycero-3-phosphocholine + a fatty acid + H(+). Functionally, scorpion venom phospholipase A2 (PLA2) that shows high hydrolytic activities towards lecithin and acts as an effective blocker of all angiogenesis key steps in vivo and in vitro. It has no effect on apoptosis and does not display hemolytic, inflammatory or neurotoxic effects. PLA2 catalyzes the calcium-dependent hydrolysis of the 2-acyl groups in 3-sn-phosphoglycerides. The protein is Phospholipase A2 hemilipin of Hemiscorpius lepturus (Scorpion).